A 351-amino-acid chain; its full sequence is Small ribosomal subunit biogenesis GTPase RsgA (351 aa).

Positions M1–R12 are enriched in basic residues. A disordered region spans residues M1 to G37. Over residues R13–M31 the composition is skewed to basic and acidic residues. In terms of domain architecture, CP-type G spans Y112–F274. Residues N160–D163 and G214–S222 contribute to the GTP site. Zn(2+)-binding residues include C298, C303, H305, and C311.

It belongs to the TRAFAC class YlqF/YawG GTPase family. RsgA subfamily. In terms of assembly, monomer. Associates with 30S ribosomal subunit, binds 16S rRNA. Requires Zn(2+) as cofactor.

The protein resides in the cytoplasm. Its function is as follows. One of several proteins that assist in the late maturation steps of the functional core of the 30S ribosomal subunit. Helps release RbfA from mature subunits. May play a role in the assembly of ribosomal proteins into the subunit. Circularly permuted GTPase that catalyzes slow GTP hydrolysis, GTPase activity is stimulated by the 30S ribosomal subunit. This is Small ribosomal subunit biogenesis GTPase RsgA from Photorhabdus laumondii subsp. laumondii (strain DSM 15139 / CIP 105565 / TT01) (Photorhabdus luminescens subsp. laumondii).